The sequence spans 304 residues: Small ribosomal subunit biogenesis GTPase RsgA (304 aa).

A CP-type G domain is found at 70-229 (HNELNRPNIA…IADTPGFSKL (160 aa)). Residues 119 to 122 (TKID) and 172 to 180 (GQTGVGKST) each bind GTP. 4 residues coordinate Zn(2+): C253, C259, H261, and C267.

The protein belongs to the TRAFAC class YlqF/YawG GTPase family. RsgA subfamily. As to quaternary structure, monomer. Associates with 30S ribosomal subunit, binds 16S rRNA. Zn(2+) is required as a cofactor.

The protein resides in the cytoplasm. In terms of biological role, one of several proteins that assist in the late maturation steps of the functional core of the 30S ribosomal subunit. Helps release RbfA from mature subunits. May play a role in the assembly of ribosomal proteins into the subunit. Circularly permuted GTPase that catalyzes slow GTP hydrolysis, GTPase activity is stimulated by the 30S ribosomal subunit. The chain is Small ribosomal subunit biogenesis GTPase RsgA from Phytoplasma mali (strain AT).